Here is an 846-residue protein sequence, read N- to C-terminus: Translation initiation factor IF-2 (846 aa).

The segment at 94–263 is disordered; the sequence is QRSPEEIQAE…HGFQNPTGPV (170 aa). Basic and acidic residues predominate over residues 96-135; it reads SPEEIQAEQKRELDERRAAENAARDKVEAEVRQRNEEQAR. 2 stretches are compositionally biased toward low complexity: residues 136–148 and 158–176; these read RQAAGSAAAAPAP and AAPVAAPAPVVADAPASED. Basic and acidic residues-rich tracts occupy residues 177–206 and 230–239; these read AAARAAERKKDETRRNESRTRDDDRRRGEA and TTDEESDGAR. Basic residues predominate over residues 240 to 253; it reads RGRGGKSKLKKRNQ. Positions 346–513 constitute a tr-type G domain; sequence SRAPVVTVMG…AVLLQAEILE (168 aa). Residues 355-362 are G1; the sequence is GHVDHGKT. Residue 355 to 362 participates in GTP binding; that stretch reads GHVDHGKT. Residues 380–384 are G2; sequence GITQH. The segment at 401–404 is G3; the sequence is DTPG. Residues 401-405 and 455-458 each bind GTP; these read DTPGH and NKID. Residues 455–458 form a G4 region; sequence NKID. Residues 491-493 are G5; it reads SAK.

The protein belongs to the TRAFAC class translation factor GTPase superfamily. Classic translation factor GTPase family. IF-2 subfamily.

Its subcellular location is the cytoplasm. Functionally, one of the essential components for the initiation of protein synthesis. Protects formylmethionyl-tRNA from spontaneous hydrolysis and promotes its binding to the 30S ribosomal subunits. Also involved in the hydrolysis of GTP during the formation of the 70S ribosomal complex. This Pseudomonas putida (strain ATCC 47054 / DSM 6125 / CFBP 8728 / NCIMB 11950 / KT2440) protein is Translation initiation factor IF-2.